Reading from the N-terminus, the 400-residue chain is MNYDHILIRYGEMALKGKNIKQFIIKLQENIQQKIKHFEGVKVKRTQGRMFVLLNGNEPEPIIEKLKNVFGIHSLSIAIRVENTEEQIKEGALYALKREANAKTFKVTVKRISKDFPIPSQQMNQILGGHLLANTNDITVNVHEPDVEVRVEIRKEATYITSGTIRCRGGLPVGTSGKSLLLLSGGIDSPVAGFLAMKRGVQLEAIHFHSPPFTSERAKQKVLDLTQTLTKYGKSIKVHIVPFTKLQQEIFREMPNDYAMTIMRRMMFRISERICEQEEILSLTTGENLGQVASQTMQSMHTINEVTNYPIIRPLISMDKQEVIEVSQEIGTYETSIQPYEDCCTIFVPKSPKTKPKREKVNYYESHHDFTPTMEETINGIETVKITDKTVIDQSFKDLL.

The THUMP domain occupies 60-164 (EPIIEKLKNV…KEATYITSGT (105 aa)). ATP is bound by residues 182-183 (LL), 207-208 (HF), R264, G286, and Q295.

The protein belongs to the ThiI family.

Its subcellular location is the cytoplasm. The catalysed reaction is [ThiI sulfur-carrier protein]-S-sulfanyl-L-cysteine + a uridine in tRNA + 2 reduced [2Fe-2S]-[ferredoxin] + ATP + H(+) = [ThiI sulfur-carrier protein]-L-cysteine + a 4-thiouridine in tRNA + 2 oxidized [2Fe-2S]-[ferredoxin] + AMP + diphosphate. The enzyme catalyses [ThiS sulfur-carrier protein]-C-terminal Gly-Gly-AMP + S-sulfanyl-L-cysteinyl-[cysteine desulfurase] + AH2 = [ThiS sulfur-carrier protein]-C-terminal-Gly-aminoethanethioate + L-cysteinyl-[cysteine desulfurase] + A + AMP + 2 H(+). It participates in cofactor biosynthesis; thiamine diphosphate biosynthesis. In terms of biological role, catalyzes the ATP-dependent transfer of a sulfur to tRNA to produce 4-thiouridine in position 8 of tRNAs, which functions as a near-UV photosensor. Also catalyzes the transfer of sulfur to the sulfur carrier protein ThiS, forming ThiS-thiocarboxylate. This is a step in the synthesis of thiazole, in the thiamine biosynthesis pathway. The sulfur is donated as persulfide by IscS. This Oceanobacillus iheyensis (strain DSM 14371 / CIP 107618 / JCM 11309 / KCTC 3954 / HTE831) protein is Probable tRNA sulfurtransferase.